The following is a 305-amino-acid chain: Serine/threonine-protein phosphatase PP-X isozyme 1 (305 aa).

Positions 51, 53, 79, and 111 each coordinate Mn(2+). Residue histidine 112 is the Proton donor of the active site. Mn(2+) is bound by residues histidine 161 and histidine 236.

It belongs to the PPP phosphatase family. PP-4 (PP-X) subfamily. As to quaternary structure, interacts with TAP46. Mn(2+) serves as cofactor. In terms of tissue distribution, ubiquitous, mostly expressed in root mersitems, flowers, and vascular tissues.

The protein localises to the plastid stroma. The enzyme catalyses O-phospho-L-seryl-[protein] + H2O = L-seryl-[protein] + phosphate. It carries out the reaction O-phospho-L-threonyl-[protein] + H2O = L-threonyl-[protein] + phosphate. The polypeptide is Serine/threonine-protein phosphatase PP-X isozyme 1 (PPX1) (Arabidopsis thaliana (Mouse-ear cress)).